Reading from the N-terminus, the 451-residue chain is Phosphoglucosamine mutase (451 aa).

The active-site Phosphoserine intermediate is the Ser107. 4 residues coordinate Mg(2+): Ser107, Asp246, Asp248, and Asp250. Residue Ser107 is modified to Phosphoserine.

Belongs to the phosphohexose mutase family. Mg(2+) serves as cofactor. In terms of processing, activated by phosphorylation.

It carries out the reaction alpha-D-glucosamine 1-phosphate = D-glucosamine 6-phosphate. Functionally, catalyzes the conversion of glucosamine-6-phosphate to glucosamine-1-phosphate. The chain is Phosphoglucosamine mutase from Burkholderia ambifaria (strain ATCC BAA-244 / DSM 16087 / CCUG 44356 / LMG 19182 / AMMD) (Burkholderia cepacia (strain AMMD)).